Consider the following 1360-residue polypeptide: Lysine-specific demethylase REF6 (1360 aa).

Ala2 is modified (N-acetylalanine). A JmjN domain is found at 20-61 (APEFRPTLAEFQDPIAYILKIEEEASRYGICKILPPLPPPSK). In terms of domain architecture, JmjC spans 203 to 369 (ETAWNMRAMS…MAKDAAIRRA (167 aa)). Fe cation is bound by residues His246, Glu248, and His337. Residues 652–698 (YGDSSDSEEEDQKGLVTPSSKGETKTYDQEGSDGHEEARDGRTSDFN) form a disordered region. Residues 673 to 694 (GETKTYDQEGSDGHEEARDGRT) show a composition bias toward basic and acidic residues. The Nuclear localization signal motif lies at 944–951 (CRKRKIRA). 4 disordered regions span residues 955–1012 (PRKK…DPHK), 1044–1081 (AASE…SQQT), 1133–1155 (TGKR…QSSR), and 1172–1238 (EELD…NEEE). Composition is skewed to polar residues over residues 994–1008 (ETGN…NQMS) and 1046–1057 (SESSMENGSQHS). A compositionally biased stretch (basic residues) spans 1136 to 1147 (RQTRSTAKRIAK). A compositionally biased stretch (acidic residues) spans 1225-1238 (EKEEEEEEEENEEE). The C2H2-type 1; degenerate zinc-finger motif lies at 1243–1266 (YQCNMEGCTMSFSSEKQLMLHKRN). 16 residues coordinate Zn(2+): Cys1245, Cys1250, His1263, Cys1268, Cys1273, His1280, His1286, His1290, Cys1298, Cys1303, His1316, His1320, Cys1328, Cys1333, His1346, and His1352. 3 C2H2-type zinc fingers span residues 1266–1290 (NICP…QRVH), 1296–1320 (LKCP…IRVH), and 1326–1352 (YVCA…KTGH). The DNA-binding stretch occupies residues 1275 to 1348 (KNFFSHKYLV…FVSDFSRHKR (74 aa)).

This sequence belongs to the JHDM3 histone demethylase family. Forms homooligomers. Interacts with BZR2 (via N-terminus). Interacts with BRM in the SWI/SNF complex. Interacts (via N-terminus) with NFYC9. Associates with INO80. In terms of tissue distribution, highly expressed in the shoot apical meristem and primary and secondary root tips, and lower expression in cotyledons, leaves and root axis along vascular tissues. Detected in inflorescences, stems and siliques. Present in seeds.

It is found in the nucleus. It carries out the reaction N(6),N(6),N(6)-trimethyl-L-lysyl(27)-[histone H3] + 2-oxoglutarate + O2 = N(6),N(6)-dimethyl-L-lysyl(27)-[histone H3] + formaldehyde + succinate + CO2. It catalyses the reaction N(6),N(6)-dimethyl-L-lysyl(27)-[histone H3] + 2-oxoglutarate + O2 = N(6)-methyl-L-lysyl(27)-[histone H3] + formaldehyde + succinate + CO2. In terms of biological role, histone demethylase that demethylates 'Lys-27' (H3K27me) of histone H3, thus acting as a positive regulator of gene expression. Demethylates both tri- (H3K27me3) and di-methylated (H3K27me2) H3K27me. Also demethylates H3K4me3/2 and H3K36me3/2 in an in vitro assay. Involved in the transcriptional regulation of hundreds of genes regulating developmental patterning and responses to various stimuli. Binds DNA via its four zinc fingers in a sequence-specific manner, 5'-CTCTG(C/T)T(C/T)-3' (5'-CTCTGYTY-3'), with a preference for hypo-methylated status (e.g. cytosine methylation), to promote the demethylation of H3K27me3 and recruit the chromatin remodeler BRM in order to activate gene expression. Participates in the regulation of organ boundary formation. Bind mostly motifs located in active chromatin states which are depleted for heterochromatic modifications. Involved in the regulation of flowering time by repressing FLOWERING LOCUS C (FLC) expression. Stimulates lateral roots formation (e.g. primordium initiation and emergence) via the epigenetic de-repression of PIN genes such as PIN1, PIN3 and PIN7 directly by modulating the methylation status of their loci. Interacts with the NF-Y complex to regulate SOC1. Mediates the recruitment of BRM to its target loci. Together with EEN, involved in the epigenetic chromatin-dependent regulatory mechanism that monitors the expression of the essential multifunctional plant stress regulator EIN2 via H3K27me3 repressive histone demethylation and histone variant H2A.Z eviction, thus modulating responses to ethylene (ET), especially during embryogenesis. Eluviates seed dormancy by triggering abscisic acid (ABA) catabolism in seeds via the induction of CYP707A1 and CYP707A3 expression, genes involved in ABA degradation; binds directly to CYP707A1 and CYP707A3 loci to reduce their H3K27me3 levels in developing siliques. Required for systemic acquired resistance (SAR) toward pathogenic bacteria (e.g. Pseudomonas syringae pv tomato DC3000 (avrPto)). Together with FLD and MSI4/FVE, contributes to dehydroabietinal-dependent (DA, a diterpenoid tricyclic diterpene) activation of flowering ans SAR. Binds to the HSFA2 chromatin region to alleviate H3K27me3 repressive marks and trigger its expression in response to heat in a BRM-dependent manner. Involved in the mechanisms necessary for quick response to heat and subsequent heritable transgenerational memory of heat acclimation (global warming) such as early flowering and attenuated immunity; this process includes epigenetic regulation as well as post-transcriptional gene silencing (PTGS). In response to heat, HSFA2 is activated and promotes the expression of REF6 which in turn derepresses HSFA2, thus establishing a heritable feedback loop able to trigger SGIP1 and subsequent SGIP1-mediated SGS3 degradation; this prevents the biosynthesis of trans-acting siRNA (tasiRNA) and leads to the release of HTT5, which drives early flowering but attenuates immunity. Functionally, involved in the maintenance of H3K27me1 histone marks on euchromatin in a PRC2-dependent manner, to maintain low-level basal expression of corresponding genes. Together with ELF6, required for H3K27me3 resetting (especially in constitutive heterochromatin within the pericentromeric regions) and transgenerational inheritance of histone marks, thus acting in safeguarding genome and epigenome integrity during sexual reproduction. This chain is Lysine-specific demethylase REF6, found in Arabidopsis thaliana (Mouse-ear cress).